Reading from the N-terminus, the 261-residue chain is Glucosamine-6-phosphate deaminase (261 aa).

The Proton acceptor; for enolization step role is filled by Asp67. Asn135 (for ring-opening step) is an active-site residue. His137 acts as the Proton acceptor; for ring-opening step in catalysis. Glu142 acts as the For ring-opening step in catalysis.

It belongs to the glucosamine/galactosamine-6-phosphate isomerase family. NagB subfamily. Homohexamer.

The catalysed reaction is alpha-D-glucosamine 6-phosphate + H2O = beta-D-fructose 6-phosphate + NH4(+). The protein operates within amino-sugar metabolism; N-acetylneuraminate degradation; D-fructose 6-phosphate from N-acetylneuraminate: step 5/5. In terms of biological role, catalyzes the reversible isomerization-deamination of glucosamine 6-phosphate (GlcN6P) to form fructose 6-phosphate (Fru6P) and ammonium ion. This is Glucosamine-6-phosphate deaminase from Hahella chejuensis (strain KCTC 2396).